Reading from the N-terminus, the 236-residue chain is Lipoprotein NlpE (236 aa).

The signal sequence occupies residues 1 to 20; the sequence is MVKKAIVTAMAVISLFTLMG. A lipid anchor (N-palmitoyl cysteine) is attached at cysteine 21. Cysteine 21 carries the S-diacylglycerol cysteine lipid modification. The interval 21–100 is N-terminal domain; that stretch reads CNNRAEVDTL…WARTADKLVL (80 aa). Residues 21–236 are Periplasmic-facing; the sequence is CNNRAEVDTL…PNQDCSSLGQ (216 aa). The CXXC motif lies at 51–54; it reads CADC. Residues 126 to 236 are C-terminal domain; the sequence is PIESQFNYTL…PNQDCSSLGQ (111 aa). The segment at 144–156 is could contain a copper-binding motif; sequence MTPMTLRGMYFYM. The cysteines at positions 165 and 231 are disulfide-linked.

In terms of assembly, probably exists as a monomer in vivo, can however form homodimers which swap domains. Post-translationally, palmitoylated. Seems to only form a disulfide bond between Cys-165 and Cys-231. The 2 other cysteine residues may however be chemically active.

It is found in the cell outer membrane. Its function is as follows. Involved in copper homeostasis, could be involved in both copper efflux and the delivery of copper to copper-dependent enzymes. Required for efficient binding of stationary phase cells to hydrophobic surfaces, part of the process of biofilm formation. Functions during envelope stress responses; when overproduced induces degP through the activation of the two-component envelope stress response system CpxA/CpxR. DegP induction seems to require membrane anchoring of this protein. Structural changes and/or interaction of the CXXC motif with its environment may lead to activation of the Cpx stress response. In Escherichia coli (strain K12), this protein is Lipoprotein NlpE.